The following is a 239-amino-acid chain: Probable transcriptional regulatory protein Aave_3203 (239 aa).

Positions 1 to 20 (MAGHSKWANIQHRKGRQDEK) are disordered.

This sequence belongs to the TACO1 family.

It is found in the cytoplasm. This is Probable transcriptional regulatory protein Aave_3203 from Paracidovorax citrulli (strain AAC00-1) (Acidovorax citrulli).